A 229-amino-acid polypeptide reads, in one-letter code: NAD(P)H-quinone oxidoreductase subunit K, chloroplastic (229 aa).

Positions 43, 44, 108, and 139 each coordinate [4Fe-4S] cluster.

It belongs to the complex I 20 kDa subunit family. In terms of assembly, NDH is composed of at least 16 different subunits, 5 of which are encoded in the nucleus. It depends on [4Fe-4S] cluster as a cofactor.

The protein resides in the plastid. The protein localises to the chloroplast thylakoid membrane. The catalysed reaction is a plastoquinone + NADH + (n+1) H(+)(in) = a plastoquinol + NAD(+) + n H(+)(out). The enzyme catalyses a plastoquinone + NADPH + (n+1) H(+)(in) = a plastoquinol + NADP(+) + n H(+)(out). Functionally, NDH shuttles electrons from NAD(P)H:plastoquinone, via FMN and iron-sulfur (Fe-S) centers, to quinones in the photosynthetic chain and possibly in a chloroplast respiratory chain. The immediate electron acceptor for the enzyme in this species is believed to be plastoquinone. Couples the redox reaction to proton translocation, and thus conserves the redox energy in a proton gradient. This chain is NAD(P)H-quinone oxidoreductase subunit K, chloroplastic, found in Aethionema grandiflorum (Persian stone-cress).